The following is a 371-amino-acid chain: Cytochrome b (371 aa).

Transmembrane regions (helical) follow at residues 25–45 (FGSMLLTCLALQVLTGFFLAV), 69–90 (WMMQNLHAIGASMFFICIYIHI), 105–125 (WMSGITLLITLMATAFFGYVL), and 170–190 (FFALHFILPFAIISLSSLHII). His75 and His89 together coordinate heme b. Residues His174 and His188 each contribute to the heme b site. Position 193 (His193) interacts with a ubiquinone. 4 helical membrane-spanning segments follow: residues 218 to 238 (HKDLLLLTLMMLSLLIIVSFF), 280 to 300 (LGGALALVMSIMILFTIPFTH), 312 to 332 (FSQLMFWTLVSTFITITWAAT), and 339 to 358 (FIVISQVTSTLYFTFFLLIP).

This sequence belongs to the cytochrome b family. In terms of assembly, the cytochrome bc1 complex contains 3 respiratory subunits (MT-CYB, CYC1 and UQCRFS1), 2 core proteins (UQCRC1 and UQCRC2) and probably 6 low-molecular weight proteins. It depends on heme b as a cofactor.

Its subcellular location is the mitochondrion inner membrane. Functionally, component of the ubiquinol-cytochrome c reductase complex (complex III or cytochrome b-c1 complex) that is part of the mitochondrial respiratory chain. The b-c1 complex mediates electron transfer from ubiquinol to cytochrome c. Contributes to the generation of a proton gradient across the mitochondrial membrane that is then used for ATP synthesis. In Leiopython albertisii (Northern white-lipped python), this protein is Cytochrome b (MT-CYB).